Consider the following 642-residue polypeptide: Medium-chain-fatty-acid--[acyl-carrier-protein] ligase TtuA (642 aa).

The protein belongs to the ATP-dependent AMP-binding enzyme family.

It catalyses the reaction a medium-chain fatty acid + holo-[ACP] + ATP = a medium-chain fatty acyl-[ACP] + AMP + diphosphate. It carries out the reaction a medium-chain fatty acid + ATP + H(+) = a medium-chain fatty acyl-AMP + diphosphate. The enzyme catalyses a medium-chain fatty acyl-AMP + holo-[ACP] = a medium-chain fatty acyl-[ACP] + AMP + H(+). The catalysed reaction is decanoate + holo-[ACP] + ATP = decanoyl-[ACP] + AMP + diphosphate. It catalyses the reaction decanoate + ATP + H(+) = decanoyl-AMP + diphosphate. It carries out the reaction decanoyl-AMP + holo-[ACP] = decanoyl-[ACP] + AMP + H(+). Ligase likely involved in the biosynthesis of a polyyne metabolite. Catalyzes the activation of decanoic acid, followed by the loading of the activated decanoic acid onto the acyl carrier protein TtuC. Decanoic acid is the preferred substrate, but it can also use 10-undecenoic acid and lauric acid. Nonanoic acid and 7-octenoic acid are only weakly activated. The sequence is that of Medium-chain-fatty-acid--[acyl-carrier-protein] ligase TtuA from Teredinibacter turnerae (strain ATCC 39867 / T7901).